Here is a 545-residue protein sequence, read N- to C-terminus: Ribulokinase (545 aa).

The protein belongs to the ribulokinase family.

The catalysed reaction is D-ribulose + ATP = D-ribulose 5-phosphate + ADP + H(+). It carries out the reaction L-ribulose + ATP = L-ribulose 5-phosphate + ADP + H(+). The protein operates within carbohydrate degradation; L-arabinose degradation via L-ribulose; D-xylulose 5-phosphate from L-arabinose (bacterial route): step 2/3. The sequence is that of Ribulokinase from Staphylococcus aureus (strain Mu3 / ATCC 700698).